The following is a 276-amino-acid chain: N-acetylmuramoyl-L-alanine amidase AmiD (276 aa).

Positions 1 to 16 (MRRFFWLVAAALLLAG) are cleaved as a signal peptide. The N-palmitoyl cysteine moiety is linked to residue Cys17. A lipid anchor (S-diacylglycerol cysteine) is attached at Cys17. The N-acetylmuramoyl-L-alanine amidase domain maps to 42–179 (PRIKVLVIHY…APQRKDDPGP (138 aa)). Residue His50 coordinates Zn(2+). Residue 51 to 52 (YT) coordinates substrate. The Proton acceptor role is filled by Glu119. Residues His166 and Asp176 each contribute to the Zn(2+) site.

Belongs to the N-acetylmuramoyl-L-alanine amidase 2 family. Zn(2+) serves as cofactor.

The protein resides in the cell outer membrane. It carries out the reaction Hydrolyzes the link between N-acetylmuramoyl residues and L-amino acid residues in certain cell-wall glycopeptides.. The sequence is that of N-acetylmuramoyl-L-alanine amidase AmiD (amiD) from Escherichia coli (strain K12).